Consider the following 296-residue polypeptide: Maltose/maltodextrin transport system permease protein MalG (296 aa).

Over 1 to 12 the chain is Cytoplasmic; it reads MAMVQPKSQKAR. A helical membrane pass occupies residues 13–35; sequence LFITHLLLLLFIAAIMFPLLMVV. Residues 36–88 are Periplasmic-facing; sequence AISLRQGNFATGSLIPEQISWDHWKLALGFSVEQADGRITPPPFPVLLWLWNS. Residues 85–281 form the ABC transmembrane type-1 domain; that stretch reads LWNSVKVAGI…LPITIVFLLA (197 aa). Residues 89-111 form a helical membrane-spanning segment; that stretch reads VKVAGISAIGIVALSTTCAYAFA. Residues 112 to 123 are Cytoplasmic-facing; the sequence is RMRFPGKATLLK. The helical transmembrane segment at 124-143 threads the bilayer; that stretch reads GMLIFQMFPAVLSLVALYAL. At 144–152 the chain is on the periplasmic side; sequence FDRLGEYIP. Residues 153-175 traverse the membrane as a helical segment; sequence FIGLNTHGGVIFAYLGGIALHVW. Over 176–204 the chain is Cytoplasmic; it reads TIKGYFETIDSSLEEAAALDGATPWQAFR. Residues 205–227 form a helical membrane-spanning segment; that stretch reads LVLLPLSVPILAVVFILSFIAAI. The Periplasmic portion of the chain corresponds to 228-257; the sequence is TEVPVASLLLRDVNSYTLAVGMQQYLNPQN. A helical membrane pass occupies residues 258–280; sequence YLWGDFAAAAVMSALPITIVFLL. Residues 281–296 are Cytoplasmic-facing; sequence AQRWLVNGLTAGGVKG.

Belongs to the binding-protein-dependent transport system permease family. MalFG subfamily. As to quaternary structure, the complex is composed of two ATP-binding proteins (MalK), two transmembrane proteins (MalG and MalF) and a solute-binding protein (MalE).

The protein localises to the cell inner membrane. Functionally, part of the ABC transporter complex MalEFGK involved in maltose/maltodextrin import. Probably responsible for the translocation of the substrate across the membrane. In Escherichia coli O157:H7, this protein is Maltose/maltodextrin transport system permease protein MalG (malG).